We begin with the raw amino-acid sequence, 155 residues long: Small ribosomal subunit protein uS7 (155 aa).

This sequence belongs to the universal ribosomal protein uS7 family. Part of the 30S ribosomal subunit. Contacts proteins S9 and S11.

Functionally, one of the primary rRNA binding proteins, it binds directly to 16S rRNA where it nucleates assembly of the head domain of the 30S subunit. Is located at the subunit interface close to the decoding center, probably blocks exit of the E-site tRNA. This is Small ribosomal subunit protein uS7 from Lactococcus lactis subsp. lactis (strain IL1403) (Streptococcus lactis).